The following is a 502-amino-acid chain: Cyanidin 3-O-glucoside 5-O-glucosyltransferase (acyl-glucose) (502 aa).

A signal peptide spans 1–30; that stretch reads MNMSCKFEIVLLVSWWLLLVLVFGVESSMF. A glycan (N-linked (GlcNAc...) asparagine) is linked at Asn-2. Residues Gln-52, His-150, and 196–197 contribute to the a beta-D-glucoside site; that span reads NE. The active-site Proton donor is Glu-197. Asn-303 carries N-linked (GlcNAc...) asparagine glycosylation. Residues Tyr-320 and Glu-388 each contribute to the a beta-D-glucoside site. The active-site Nucleophile is the Glu-388. N-linked (GlcNAc...) asparagine glycosylation is present at Asn-425. 2 residues coordinate a beta-D-glucoside: Trp-435 and Phe-451.

This sequence belongs to the glycosyl hydrolase 1 family. As to expression, expressed in petals.

The protein resides in the vacuole. It carries out the reaction cyanidin 3-O-beta-D-glucoside + 1-O-(trans-sinapoyl)-beta-D-glucose = cyanidin 3,5-di-O-beta-D-glucoside + (E)-sinapate. It participates in pigment biosynthesis; anthocyanin biosynthesis. Functionally, beta-glycosidase that catalyzes the transfer of glucose moiety to anthocyanidin 3-glucoside at the 5 position. Anthocyanins are ubiquitous colored pigments that are responsible for variations in petal color. Uses acyl-glucoses, but not UDP-glucose, as the glucose donor. The sequence is that of Cyanidin 3-O-glucoside 5-O-glucosyltransferase (acyl-glucose) (AA5GT) from Dianthus caryophyllus (Carnation).